The primary structure comprises 373 residues: 3 beta-hydroxysteroid dehydrogenase/Delta 5--&gt;4-isomerase type 1 (373 aa).

NADP(+)-binding positions include 10-15, Y155, and K159; that span reads GAGGFL. Residue K159 is the Proton donor of the active site. The helical transmembrane segment at 288-308 threads the bilayer; that stretch reads LALMYWIGFLLEVVSFLLSPV.

It belongs to the 3-beta-HSD family. In terms of tissue distribution, adrenal glands, testes and ovaries.

Its subcellular location is the endoplasmic reticulum membrane. The protein localises to the mitochondrion membrane. It carries out the reaction a 3beta-hydroxy-Delta(5)-steroid + NAD(+) = a 3-oxo-Delta(5)-steroid + NADH + H(+). The enzyme catalyses pregnenolone + NAD(+) = pregn-5-ene-3,20-dione + NADH + H(+). It catalyses the reaction 3beta-hydroxyandrost-5-en-17-one + NAD(+) = androst-5-ene-3,17-dione + NADH + H(+). The catalysed reaction is androst-5-en-3beta,17beta-diol + NAD(+) = 17beta-hydroxy-androst-5-en-3-one + NADH + H(+). It carries out the reaction a 3beta-hydroxysteroid + NADP(+) = a 3-oxosteroid + NADPH + H(+). The enzyme catalyses 5alpha-androstane-3beta,17beta-diol + NADP(+) = 17beta-hydroxy-5alpha-androstan-3-one + NADPH + H(+). It catalyses the reaction 3beta-hydroxy-5alpha-androstan-17-one + NADP(+) = 5alpha-androstan-3,17-dione + NADPH + H(+). The catalysed reaction is a 3-oxo-Delta(5)-steroid = a 3-oxo-Delta(4)-steroid. It carries out the reaction pregn-5-ene-3,20-dione = progesterone. The enzyme catalyses androst-5-ene-3,17-dione = androst-4-ene-3,17-dione. It catalyses the reaction 17beta-hydroxy-androst-5-en-3-one = testosterone. The catalysed reaction is 5alpha-androstane-3beta,17beta-diol + NAD(+) = 17beta-hydroxy-5alpha-androstan-3-one + NADH + H(+). Its pathway is steroid hormone biosynthesis. It participates in steroid metabolism. In terms of biological role, a bifunctional enzyme responsible for the oxidation and isomerization of 3beta-hydroxy-Delta(5)-steroid precursors to 3-oxo-Delta(4)-steroids, an essential step in steroid hormone biosynthesis. Specifically catalyzes the conversion of pregnenolone to progesterone, 17alpha-hydroxypregnenolone to 17alpha-hydroxyprogesterone, dehydroepiandrosterone (DHEA) to 4-androstenedione and androstenediol to testosterone. Additionally, catalyzes the interconversion between 3beta-hydroxy and 3-oxo-5alpha-androstane steroids controlling the bioavalability of the active forms. Specifically converts dihydrotestosterone to its inactive form 5alpha-androstanediol, that does not bind androgen receptor/AR. Also converts androstanedione, a precursor of testosterone and estrone, to epiandrosterone. Expected to use NAD(+) as preferred electron donor for the 3beta-hydroxy-steroid dehydrogenase activity and NADPH for the 3-ketosteroid reductase activity. The chain is 3 beta-hydroxysteroid dehydrogenase/Delta 5--&gt;4-isomerase type 1 (HSD3B1) from Macaca mulatta (Rhesus macaque).